The sequence spans 378 residues: Cytochrome b (378 aa).

4 helical membrane-spanning segments follow: residues 35–55 (FGSLLGLVLSIQLVTGIFLAM), 79–101 (WIIRLVHANGASFFFICLYCHIG), 114–134 (TWIMGVLLFILVMAAAFLGYV), and 180–200 (FFSLHFLVPFLVSLGAMLHIF). Residues His85 and His99 each contribute to the heme b site. The heme b site is built by His184 and His198. Residue His203 coordinates a ubiquinone. Transmembrane regions (helical) follow at residues 226–246 (YSAKDLLGFFFMFFFIIFISF), 290–310 (LGGVLGLLCALLVLFSLPLTH), 326–346 (FFWLFIVSFLMLTIGGGQPVC), and 350–370 (VMCSQVWSCLYFTYFILCGPL).

It belongs to the cytochrome b family. The main subunits of complex b-c1 are: cytochrome b, cytochrome c1 and the Rieske protein. Requires heme b as cofactor.

The protein resides in the mitochondrion inner membrane. Functionally, component of the ubiquinol-cytochrome c reductase complex (complex III or cytochrome b-c1 complex) that is part of the mitochondrial respiratory chain. The b-c1 complex mediates electron transfer from ubiquinol to cytochrome c. Contributes to the generation of a proton gradient across the mitochondrial membrane that is then used for ATP synthesis. This is Cytochrome b (mt:Cyt-b) from Paraspadella gotoi (Arrow worm).